The following is a 222-amino-acid chain: Cytidylate kinase (222 aa).

Position 10 to 18 (10 to 18) interacts with ATP; the sequence is GPAGSGKSS.

The protein belongs to the cytidylate kinase family. Type 1 subfamily.

It localises to the cytoplasm. The catalysed reaction is CMP + ATP = CDP + ADP. It carries out the reaction dCMP + ATP = dCDP + ADP. This is Cytidylate kinase from Acholeplasma laidlawii (strain PG-8A).